We begin with the raw amino-acid sequence, 438 residues long: Argininosuccinate lyase (438 aa).

Belongs to the lyase 1 family. Argininosuccinate lyase subfamily.

It is found in the cytoplasm. The catalysed reaction is 2-(N(omega)-L-arginino)succinate = fumarate + L-arginine. It participates in amino-acid biosynthesis; L-arginine biosynthesis; L-arginine from L-ornithine and carbamoyl phosphate: step 3/3. This is Argininosuccinate lyase from Clostridioides difficile (strain 630) (Peptoclostridium difficile).